We begin with the raw amino-acid sequence, 136 residues long: MSFMKEFREFAMRGNVVDLAVGVIIGAAFGRIVSSLVADIIMPPLGLLLGGVDFKQFHFVLRAAEGNIPAVVMNYGSFIQSVFDFVIVALAIFSAVKLMNKLRREKAEEPAAPPAPTTEEKLLAEIRDLLKAQQQK.

Helical transmembrane passes span F10 to G30 and G76 to V96.

It belongs to the MscL family. Homopentamer.

The protein localises to the cell inner membrane. Functionally, channel that opens in response to stretch forces in the membrane lipid bilayer. May participate in the regulation of osmotic pressure changes within the cell. The chain is Large-conductance mechanosensitive channel from Yersinia enterocolitica serotype O:8 / biotype 1B (strain NCTC 13174 / 8081).